A 622-amino-acid polypeptide reads, in one-letter code: Low affinity potassium transport system protein Kup (622 aa).

Helical transmembrane passes span 9 to 29, 49 to 69, 103 to 123, 137 to 157, 165 to 185, 213 to 233, 247 to 267, 276 to 296, 337 to 357, 363 to 383, 396 to 416, and 419 to 439; these read LPAITLAAIGVVYGDIGTSPL, VFGFLSLIFWLLIFVVSIKYL, VIMGLIGGSFFYGEVVITPAI, PQLDTWIVPLSIIVLTLLFMI, VGKLFAPIMLTWFLILAVLGL, VSFIALGAVVLSITGVEALYA, WFTVVLPSLVLNYFGQGALLL, PFFLLAPDWALIPLLILAALA, IYIPFVNWLLYFAVVVVIVSF, LAAAYGIAVTGTMVLTSILST, FVALILIAFLCVDIPLFSANL, and LLSGGWLPLSLGLIMFTIMTT.

Belongs to the HAK/KUP transporter (TC 2.A.72) family.

Its subcellular location is the cell inner membrane. The enzyme catalyses K(+)(in) + H(+)(in) = K(+)(out) + H(+)(out). Functionally, responsible for the low-affinity transport of potassium into the cell. Likely operates as a K(+):H(+) symporter. The sequence is that of Low affinity potassium transport system protein Kup from Salmonella paratyphi B (strain ATCC BAA-1250 / SPB7).